Reading from the N-terminus, the 660-residue chain is UvrABC system protein B (660 aa).

Residues Asp-26 to Lys-196 enclose the Helicase ATP-binding domain. Residue Gly-39 to Thr-46 participates in ATP binding. Positions Tyr-92–Asn-115 match the Beta-hairpin motif. Positions Gln-431–Ile-593 constitute a Helicase C-terminal domain. In terms of domain architecture, UVR spans Lys-622–Glu-657.

It belongs to the UvrB family. In terms of assembly, forms a heterotetramer with UvrA during the search for lesions. Interacts with UvrC in an incision complex.

Its subcellular location is the cytoplasm. In terms of biological role, the UvrABC repair system catalyzes the recognition and processing of DNA lesions. A damage recognition complex composed of 2 UvrA and 2 UvrB subunits scans DNA for abnormalities. Upon binding of the UvrA(2)B(2) complex to a putative damaged site, the DNA wraps around one UvrB monomer. DNA wrap is dependent on ATP binding by UvrB and probably causes local melting of the DNA helix, facilitating insertion of UvrB beta-hairpin between the DNA strands. Then UvrB probes one DNA strand for the presence of a lesion. If a lesion is found the UvrA subunits dissociate and the UvrB-DNA preincision complex is formed. This complex is subsequently bound by UvrC and the second UvrB is released. If no lesion is found, the DNA wraps around the other UvrB subunit that will check the other stand for damage. This is UvrABC system protein B from Metamycoplasma arthritidis (strain 158L3-1) (Mycoplasma arthritidis).